Reading from the N-terminus, the 279-residue chain is 30 kDa ribonucleoprotein, chloroplastic (279 aa).

Positions 87–165 (LKIFVGNLLF…RALRVNSGPP (79 aa)) constitute an RRM 1 domain. The interval 156-187 (RALRVNSGPPPEKRENSSFRENSSFRGGSRGG) is disordered. Residues 166–193 (PEKRENSSFRENSSFRGGSRGGGSFDSS) form a linker (Gly-rich) region. In terms of domain architecture, RRM 2 spans 194 to 272 (NRVYVGNLAW…RAIRVSPAEA (79 aa)).

As to expression, expressed at high levels in the leaves and seedlings, and lower levels are seen in the stems and roots.

It localises to the plastid. The protein resides in the chloroplast. Could be involved in splicing and/or processing of chloroplast RNA's. The chain is 30 kDa ribonucleoprotein, chloroplastic from Nicotiana plumbaginifolia (Leadwort-leaved tobacco).